Consider the following 219-residue polypeptide: UPF0173 metal-dependent hydrolase LSL_0324 (219 aa).

This sequence belongs to the UPF0173 family.

The protein is UPF0173 metal-dependent hydrolase LSL_0324 of Ligilactobacillus salivarius (strain UCC118) (Lactobacillus salivarius).